A 421-amino-acid polypeptide reads, in one-letter code: Myb-related protein Pp2 (421 aa).

2 consecutive HTH myb-type domains span residues 9–61 (KVGL…TNYL) and 62–116 (RPDL…KKRL). 2 DNA-binding regions (H-T-H motif) span residues 37–61 (WRAI…TNYL) and 89–112 (WSRI…NTRL). The tract at residues 119–240 (QGLDPNTHLP…VTTKSHEDHR (122 aa)) is disordered. Over residues 136-147 (DTEDDTDDEGGD) the composition is skewed to acidic residues.

It is found in the nucleus. Its function is as follows. Possible transcription activator. In Physcomitrium patens (Spreading-leaved earth moss), this protein is Myb-related protein Pp2 (PP2).